We begin with the raw amino-acid sequence, 115 residues long: Thioredoxin-1 (115 aa).

Residues 2-114 form the Thioredoxin domain; it reads LKRCNFKNQV…RQKVLEHVSA (113 aa). Catalysis depends on nucleophile residues Cys39 and Cys42. Cys39 and Cys42 are disulfide-bonded.

It belongs to the thioredoxin family. Expressed in ASJ and ASI ciliated sensory neurons. Expressed in the intestine (at protein level).

Participates in various redox reactions through the reversible oxidation of its active center dithiol to a disulfide and catalyzes dithiol-disulfide exchange reactions. Shown to facilitate the reduction of insulin disulfide bonds. Might play a role in the reversible nitrosylation of cysteine residues in target proteins, and thereby contributing to the response to intracellular nitric oxide. Shapes the ASJ sensory neuron biphasic response to nitric oxide (NO) exposure; trans-nitrosylation activity might inhibit calcium flux to the cytoplasm in ASJ neurons when exposed to a NO stimulus, whereas de-nitrosylation activity might promote calcium flux when NO is diminished. By regulating the NO-induced ASJ sensory neuron activity, mediates the avoidance response to NO-producing organisms like P.aeruginosa. Positively regulates life span extension under normal and caloric restriction conditions, dauer formation and the oxidative stress response. Contributes to the down-regulation of expression of the insulin-like neuropeptide daf-28 in the ASJ neurons in a redox-independent fashion, thereby promoting dauer formation. Negatively regulates the nuclear localization of the intestinal skn-1 transcription factor in a p38 MAPK pathway-dependent and redox-independent fashion. This is Thioredoxin-1 (trx-1) from Caenorhabditis elegans.